A 638-amino-acid polypeptide reads, in one-letter code: Keratin, type II cytoskeletal 2 oral (638 aa).

The head stretch occupies residues 1–182; that stretch reads MNRQVCKKSF…DPQIGQVKAQ (182 aa). Omega-N-methylarginine is present on residues Arg-85 and Arg-110. The segment at 183 to 218 is coil 1A; the sequence is EREQIKTLNNKFASFIDKVRFLEQQNKVLETKWELL. An IF rod domain is found at 183-496; sequence EREQIKTLNN…KLLEGEECRM (314 aa). Positions 219–237 are linker 1; sequence QQQTTGSGPSSLEPCFESY. Residues 238-329 are coil 1B; that stretch reads ISFLCKQLDS…TLYEMELSQM (92 aa). A linker 12 region spans residues 330–353; the sequence is QSHASDTSVVLSMDNNRCLDLGSI. Residues 354 to 492 form a coil 2 region; the sequence is IAEVRAQYEE…ATYRKLLEGE (139 aa). Residues 493-638 form a tail region; that stretch reads ECRMSGECQS…TSSSQHSSTK (146 aa). The disordered stretch occupies residues 532–638; sequence SGSGGYKGGS…TSSSQHSSTK (107 aa). A compositionally biased stretch (low complexity) spans 540-549; the sequence is GSSSSSSSGY. Residues 550–572 show a composition bias toward gly residues; that stretch reads GVSGGSGSGYGGVSSGSTGGRGS. The segment covering 573–583 has biased composition (low complexity); the sequence is SGSYQSSSSGS. An Omega-N-methylarginine modification is found at Arg-584. Residues 590–608 are compositionally biased toward low complexity; the sequence is SISVSHSGMGSSSGSIQTS. The segment covering 609-620 has biased composition (gly residues); sequence GGSGYKSGGGGS. A compositionally biased stretch (low complexity) spans 626-638; sequence SQTTSSSQHSSTK.

The protein belongs to the intermediate filament family. In terms of assembly, heterotetramer of two type I and two type II keratins.

Probably contributes to terminal cornification. In Homo sapiens (Human), this protein is Keratin, type II cytoskeletal 2 oral (KRT76).